A 2204-amino-acid polypeptide reads, in one-letter code: Non-reducing polyketide synthase CTB1 (2204 aa).

An N-terminal acylcarrier protein transacylase domain (SAT) region spans residues 11–250 (AFGDQTYDCS…TRLPITAPYH (240 aa)). Residues 382-815 (KSPIAILAAS…GGNTCLVLED (434 aa)) form the Ketosynthase family 3 (KS3) domain. Residues Cys-554, His-689, and His-734 each act as for beta-ketoacyl synthase activity in the active site. Positions 923-1224 (AFTGQGSAFE…QTFASINKDK (302 aa)) are malonyl-CoA:ACP transacylase (MAT) domain. Residues 1299–1619 (SSSIHKVITN…VPKRLMHYIV (321 aa)) form a product template (PT) domain region. Positions 1303–1439 (HKVITNTITA…CKIRFGSLEK (137 aa)) are N-terminal hotdog fold. The PKS/mFAS DH domain maps to 1303–1616 (HKVITNTITA…LQGVPKRLMH (314 aa)). His-1336 acts as the Proton acceptor; for dehydratase activity in catalysis. Positions 1468 to 1616 (TYRFSKGMIY…LQGVPKRLMH (149 aa)) are C-terminal hotdog fold. The Proton donor; for dehydratase activity role is filled by Asp-1528. The disordered stretch occupies residues 1625–1674 (KASGPPTEKKGSSPPVEKKASAPVAPTRPAIQRKNASIPPPATQVTPQNK). A compositionally biased stretch (basic and acidic residues) spans 1631-1644 (TEKKGSSPPVEKKA). 2 Carrier domains span residues 1679-1756 (PSVS…TRLS) and 1783-1865 (DPSP…SGST). Residues Ser-1716 and Ser-1824 each carry the O-(pantetheine 4'-phosphoryl)serine modification. The segment covering 1864–1875 (STESFDSTTTKP) has biased composition (polar residues). The disordered stretch occupies residues 1864 to 1931 (STESFDSTTT…PPKGRIPPAW (68 aa)). A compositionally biased stretch (low complexity) spans 1880–1895 (ATPPLTDSSASSPPSS). A thioesterase (TE) domain region spans residues 1945-2195 (ILFLFPDGAG…SGAQMLVEHM (251 aa)).

It depends on pantetheine 4'-phosphate as a cofactor.

The catalysed reaction is 6 malonyl-CoA + acetyl-CoA + 6 H(+) = nor-toralactone + 6 CO2 + 7 CoA + 2 H2O. The protein operates within mycotoxin biosynthesis. In terms of biological role, polyketide synthase; part of the gene cluster that mediates the biosynthesis of cercosporin, a light-activated, non-host-selective toxin. The perylenequinone chromophore of cercosporin absorbs light energy to attain an electronically-activated triplet state and produces active oxygen species such as the hydroxyl radical, superoxide, hydrogen peroxide or singlet oxygen upon reaction with oxygen molecules. These reactive oxygen species cause damage to various cellular components including lipids, proteins and nucleic acids. The first step of cercosporin biosynthesis is performed by the polyketide synthase CTB1 which catalyzes the formation of nor-toralactone. The starter unit acyltransferase (SAT) domain of CTB1 initiates polyketide extension by the selective utilization of acetyl-CoA, which is elongated to the heptaketide in the beta-ketoacyl synthase (KS) domain by successive condensations with six malonyl units introduced by the malonyl acyltransferase (MAT) domain. The product template (PT) domain catalyzes C4-C9 and C2-C11 aldol cyclizations and dehydrations to a trihydroxynaphthalene, which is thought to be delivered to the thioesterase (TE) domain for product release. The bifunctional enzyme CTB3 then methylates nor-toralactone to toralactone before conducting an unusual oxidative aromatic ring opening. The O-methyltransferase CTB2 further methylates the nascent OH-6 of the CBT3 product, blocking further oxidation at this site before the reductase CTB6 reduces the 2-oxopropyl ketone at position C7, giving naphthalene. The FAD-dependent monooxygenase CTB5 in concert with the multicopper oxidase CTB12 are responsible for homodimerization of naphthalene with CTB7 installing the dioxepine moiety, finally producing cercosporin. The fasciclin domain-containing protein CTB11 might act with CTB5 and CTB12 whereas the roles of CTB9 and CTB10 have still to be elucidated. This is Non-reducing polyketide synthase CTB1 from Cercospora beticola (Sugarbeet leaf spot fungus).